A 331-amino-acid chain; its full sequence is Ketol-acid reductoisomerase (NADP(+)) (331 aa).

One can recognise a KARI N-terminal Rossmann domain in the interval 2 to 182 (AKLFYDSDAD…GGTRAGILET (181 aa)). NADP(+) is bound by residues 25–28 (YGSQ), Ser-51, Ser-53, and 83–86 (DEFQ). His-108 is an active-site residue. Residue Gly-134 coordinates NADP(+). The region spanning 183–328 (NFKEETETDL…KTLRSMFSWL (146 aa)) is the KARI C-terminal knotted domain. Residues Asp-191, Glu-195, Glu-227, and Glu-231 each coordinate Mg(2+). Ser-252 contacts substrate.

Belongs to the ketol-acid reductoisomerase family. Requires Mg(2+) as cofactor.

The catalysed reaction is (2R)-2,3-dihydroxy-3-methylbutanoate + NADP(+) = (2S)-2-acetolactate + NADPH + H(+). It carries out the reaction (2R,3R)-2,3-dihydroxy-3-methylpentanoate + NADP(+) = (S)-2-ethyl-2-hydroxy-3-oxobutanoate + NADPH + H(+). The protein operates within amino-acid biosynthesis; L-isoleucine biosynthesis; L-isoleucine from 2-oxobutanoate: step 2/4. Its pathway is amino-acid biosynthesis; L-valine biosynthesis; L-valine from pyruvate: step 2/4. Functionally, involved in the biosynthesis of branched-chain amino acids (BCAA). Catalyzes an alkyl-migration followed by a ketol-acid reduction of (S)-2-acetolactate (S2AL) to yield (R)-2,3-dihydroxy-isovalerate. In the isomerase reaction, S2AL is rearranged via a Mg-dependent methyl migration to produce 3-hydroxy-3-methyl-2-ketobutyrate (HMKB). In the reductase reaction, this 2-ketoacid undergoes a metal-dependent reduction by NADPH to yield (R)-2,3-dihydroxy-isovalerate. The sequence is that of Ketol-acid reductoisomerase (NADP(+)) from Prochlorococcus marinus (strain NATL2A).